The primary structure comprises 466 residues: DNA polymerase delta subunit 3 (466 aa).

N-acetylalanine is present on A2. Disordered regions lie at residues 169–188 (NNELTTNGHGPPASKQVSQQ) and 199–232 (KAAAKTQETNKETKTEAKEVTNASAAGNKAPGKG). The segment covering 206 to 217 (ETNKETKTEAKE) has biased composition (basic and acidic residues). K258 participates in a covalent cross-link: Glycyl lysine isopeptide (Lys-Gly) (interchain with G-Cter in SUMO); alternate. Residue K258 forms a Glycyl lysine isopeptide (Lys-Gly) (interchain with G-Cter in SUMO2); alternate linkage. K261 is covalently cross-linked (Glycyl lysine isopeptide (Lys-Gly) (interchain with G-Cter in SUMO2)). 2 disordered regions span residues 274–393 (KLAT…KTYL) and 406–466 (ESES…FQRK). T277 carries the phosphothreonine modification. Residues 286-296 (KKAEPVKVLQK) show a composition bias toward basic and acidic residues. S307 carries the post-translational modification Phosphoserine. The segment covering 349–361 (PSPPPPPSPPLEP) has biased composition (pro residues). Phosphoserine occurs at positions 407 and 409. T411 is subject to Phosphothreonine. S413 bears the Phosphoserine mark. Positions 432-441 (VKKEPREERK) are enriched in basic and acidic residues. K433 participates in a covalent cross-link: Glycyl lysine isopeptide (Lys-Gly) (interchain with G-Cter in SUMO); alternate. K433 is covalently cross-linked (Glycyl lysine isopeptide (Lys-Gly) (interchain with G-Cter in SUMO2); alternate). Residues 455–466 (RQVSITGFFQRK) are compositionally biased toward polar residues. The short motif at 456 to 463 (QVSITGFF) is the PIP-box element. S458 bears the Phosphoserine mark.

In terms of assembly, component of both the DNA polymerase delta and DNA polymerase zeta complexes. The tetrameric DNA polymerase delta complex (Pol-delta4), which consists of POLD1/p125, POLD2/p50, POLD3/p66/p68 and POLD4/p12, with POLD1 bearing DNA polymerase and 3' to 5' proofreading exonuclease activities. Within this complex, directly interacts with POLD2. Following stress caused by DNA damaging agents or by replication stress, POLD4 is degraded and Pol-delta4 is converted into a trimeric form of the complex (Pol-delta3), which consists of POLD1, POLD2 and POLD3. Pol-delta3 is the major form occurring at S phase replication sites, as well as DNA damage sites. Directly interacts with PCNA, as do POLD1 and POLD4; this interaction stimulates Pol-delta polymerase activity. POLD3 phosphorylation at Ser-458 impairs PCNA binding. Component of the DNA polymerase zeta complex (POLZ), which consists of REV3L, MAD2L2, POLD2 and POLD3, with REV3L bearing DNA polymerase catalytic activity. The DNA polymerase delta complex interacts with POLDIP2; this interaction is probably mediated through direct binding to POLD2. Post-translationally, ubiquitinated, but not targeted to the proteasome. Sumoylated. Sumoylation with SUMO3 may be predominant. Phosphorylation at Ser-458 is catalyzed in vitro by PKA. It is thought to decrease the affinity for PCNA and Pol-delta4 processivity. Can also be phosphorylated in vitro by CDK1-cyclin-A complex, as well as CDK2-cyclin-A and CDK2-cyclin-E complexes. PCNA interferes with CDK-cyclin phosphorylation.

The protein localises to the cytoplasm. It is found in the nucleus. Accessory component of both the DNA polymerase delta complex and the DNA polymerase zeta complex. As a component of the trimeric and tetrameric DNA polymerase delta complexes (Pol-delta3 and Pol-delta4, respectively), plays a role in high fidelity genome replication, including in lagging strand synthesis, and repair. Required for optimal Pol-delta activity. Stabilizes the Pol-delta complex and plays a major role in Pol-delta stimulation by PCNA. Pol-delta3 and Pol-delta4 are characterized by the absence or the presence of POLD4. They exhibit differences in catalytic activity. Most notably, Pol-delta3 shows higher proofreading activity than Pol-delta4. Although both Pol-delta3 and Pol-delta4 process Okazaki fragments in vitro, Pol-delta3 may also be better suited to fulfill this task, exhibiting near-absence of strand displacement activity compared to Pol-delta4 and stalling on encounter with the 5'-blocking oligonucleotides. Pol-delta3 idling process may avoid the formation of a gap, while maintaining a nick that can be readily ligated. Along with DNA polymerase kappa, DNA polymerase delta carries out approximately half of nucleotide excision repair (NER) synthesis following UV irradiation. In this context, POLD3, along with PCNA and RFC1-replication factor C complex, is required to recruit POLD1, the catalytic subunit of the polymerase delta complex, to DNA damage sites. Under conditions of DNA replication stress, required for the repair of broken replication forks through break-induced replication (BIR). Involved in the translesion synthesis (TLS) of templates carrying O6-methylguanine or abasic sites performed by Pol-delta4, independently of DNA polymerase zeta (REV3L) or eta (POLH). Facilitates abasic site bypass by DNA polymerase delta by promoting extension from the nucleotide inserted opposite the lesion. Also involved in TLS, as a component of the tetrameric DNA polymerase zeta complex. Along with POLD2, dramatically increases the efficiency and processivity of DNA synthesis of the DNA polymerase zeta complex compared to the minimal zeta complex, consisting of only REV3L and REV7. The protein is DNA polymerase delta subunit 3 (POLD3) of Homo sapiens (Human).